A 394-amino-acid chain; its full sequence is GTPase Obg (394 aa).

The Obg domain maps to 4–162 (SNFVDYVKIY…LMVILELKLL (159 aa)). The 167-residue stretch at 163-329 (ADVGLVGFPN…LKDILWTELN (167 aa)) folds into the OBG-type G domain. Residues 169–176 (GFPNAGKS), 194–198 (FTTLE), 216–219 (DIPG), 283–286 (TKSD), and 310–312 (SSV) contribute to the GTP site. Mg(2+)-binding residues include serine 176 and threonine 196. Residues 358–394 (KDMGEDEDFEYEYEEDADDDFDYEYEDENWDEEEEKK) form a disordered region. Over residues 361 to 394 (GEDEDFEYEYEEDADDDFDYEYEDENWDEEEEKK) the composition is skewed to acidic residues.

This sequence belongs to the TRAFAC class OBG-HflX-like GTPase superfamily. OBG GTPase family. As to quaternary structure, monomer. The cofactor is Mg(2+).

It localises to the cytoplasm. An essential GTPase which binds GTP, GDP and possibly (p)ppGpp with moderate affinity, with high nucleotide exchange rates and a fairly low GTP hydrolysis rate. Plays a role in control of the cell cycle, stress response, ribosome biogenesis and in those bacteria that undergo differentiation, in morphogenesis control. The polypeptide is GTPase Obg (Phocaeicola vulgatus (strain ATCC 8482 / DSM 1447 / JCM 5826 / CCUG 4940 / NBRC 14291 / NCTC 11154) (Bacteroides vulgatus)).